A 170-amino-acid chain; its full sequence is Endoribonuclease YbeY (170 aa).

Residues H118, H122, and H128 each contribute to the Zn(2+) site.

This sequence belongs to the endoribonuclease YbeY family. Zn(2+) is required as a cofactor.

Its subcellular location is the cytoplasm. Single strand-specific metallo-endoribonuclease involved in late-stage 70S ribosome quality control and in maturation of the 3' terminus of the 16S rRNA. This chain is Endoribonuclease YbeY, found in Mycobacteroides abscessus (strain ATCC 19977 / DSM 44196 / CCUG 20993 / CIP 104536 / JCM 13569 / NCTC 13031 / TMC 1543 / L948) (Mycobacterium abscessus).